The sequence spans 136 residues: Histone H3 (136 aa).

The disordered stretch occupies residues 1-43; it reads MARTKQTARKSTGGKAPRKQLATKAARKSAPASGGVKKPHRYR. Lys-5 and Lys-10 each carry N6,N6,N6-trimethyllysine; alternate. N6,N6-dimethyllysine; alternate is present on residues Lys-5 and Lys-10. N6-acetyllysine; alternate is present on residues Lys-5 and Lys-10. Lys-5 carries the N6-methyllysine; alternate modification. Phosphoserine is present on Ser-11. Lys-15 and Lys-24 each carry N6-acetyllysine. Position 28 is an N6,N6,N6-trimethyllysine; alternate (Lys-28). At Lys-28 the chain carries N6,N6-dimethyllysine; alternate. Lys-28 is subject to N6-methyllysine; alternate. Ser-29 bears the Phosphoserine mark. Lys-37 carries the post-translational modification N6,N6,N6-trimethyllysine; alternate. At Lys-37 the chain carries N6,N6-dimethyllysine; alternate. Residue Lys-37 is modified to N6-methyllysine; alternate. Lys-80 carries the post-translational modification N6-methyllysine.

Belongs to the histone H3 family. As to quaternary structure, the nucleosome is a histone octamer containing two molecules each of H2A, H2B, H3 and H4 assembled in one H3-H4 heterotetramer and two H2A-H2B heterodimers. The octamer wraps approximately 147 bp of DNA. Interacts (via N-terminal tail mono-acetylated on Lys-15) with swsn-4 (via Bromo domain); the interaction is direct. Post-translationally, phosphorylated at Ser-11 and Ser-29 during M phase. Phosphorylation of Ser-11 requires air-2 but not air-1. Dephosphorylated by gsp-1 and/or gsp-2 during chromosome segregation. In terms of processing, acetylation is generally linked to gene activation. Methylation at Lys-5 is linked to gene activation and is absent from male inactive X chromosome chromatin. Methylation at Lys-10 is linked to gene repression and is enriched in male inactive X chromosome chromatin. Methylation at Lys-37 occurs on the entire length of autosomes during meiotic prophase. Trimethylation at Lys-10 and Lys-37 is specifically antagonized by jmjd-2. Dimethylation and trimethylation at Lys-28 occurs in all nuclei. The mes-2-mes-3-mes-6 complex may be responsible for Lys-28 methylation in most of the germline and in the early embryo.

It localises to the nucleus. Its subcellular location is the chromosome. Functionally, core component of nucleosome. Nucleosomes wrap and compact DNA into chromatin, limiting DNA accessibility to the cellular machineries which require DNA as a template. Histones thereby play a central role in transcription regulation, DNA repair, DNA replication and chromosomal stability. DNA accessibility is regulated via a complex set of post-translational modifications of histones, also called histone code, and nucleosome remodeling. In Caenorhabditis elegans, this protein is Histone H3 (his-2).